The chain runs to 271 residues: Putative phosphoenolpyruvate synthase regulatory protein (271 aa).

ADP is bound at residue 151 to 158 (GVSRSGKT).

This sequence belongs to the pyruvate, phosphate/water dikinase regulatory protein family. PSRP subfamily.

The catalysed reaction is [pyruvate, water dikinase] + ADP = [pyruvate, water dikinase]-phosphate + AMP + H(+). It carries out the reaction [pyruvate, water dikinase]-phosphate + phosphate + H(+) = [pyruvate, water dikinase] + diphosphate. Its function is as follows. Bifunctional serine/threonine kinase and phosphorylase involved in the regulation of the phosphoenolpyruvate synthase (PEPS) by catalyzing its phosphorylation/dephosphorylation. This Burkholderia multivorans (strain ATCC 17616 / 249) protein is Putative phosphoenolpyruvate synthase regulatory protein.